The chain runs to 359 residues: 3-dehydroquinate synthase (359 aa).

Residues Asp-71–Lys-76, Gly-104–Asp-108, Thr-128–Thr-129, Lys-141, Lys-150, and Thr-168–Thr-171 contribute to the NAD(+) site. Residues Glu-183, His-247, and His-264 each contribute to the Zn(2+) site.

Belongs to the sugar phosphate cyclases superfamily. Dehydroquinate synthase family. Co(2+) serves as cofactor. It depends on Zn(2+) as a cofactor. NAD(+) is required as a cofactor.

Its subcellular location is the cytoplasm. It catalyses the reaction 7-phospho-2-dehydro-3-deoxy-D-arabino-heptonate = 3-dehydroquinate + phosphate. The protein operates within metabolic intermediate biosynthesis; chorismate biosynthesis; chorismate from D-erythrose 4-phosphate and phosphoenolpyruvate: step 2/7. Catalyzes the conversion of 3-deoxy-D-arabino-heptulosonate 7-phosphate (DAHP) to dehydroquinate (DHQ). This chain is 3-dehydroquinate synthase, found in Coxiella burnetii (strain Dugway 5J108-111).